Here is a 156-residue protein sequence, read N- to C-terminus: ATP synthase subunit b (156 aa).

A helical transmembrane segment spans residues 7-29 (LLGQAIAFFFFVTFCMKYVWPPL).

The protein belongs to the ATPase B chain family. F-type ATPases have 2 components, F(1) - the catalytic core - and F(0) - the membrane proton channel. F(1) has five subunits: alpha(3), beta(3), gamma(1), delta(1), epsilon(1). F(0) has three main subunits: a(1), b(2) and c(10-14). The alpha and beta chains form an alternating ring which encloses part of the gamma chain. F(1) is attached to F(0) by a central stalk formed by the gamma and epsilon chains, while a peripheral stalk is formed by the delta and b chains.

It localises to the cell inner membrane. Functionally, f(1)F(0) ATP synthase produces ATP from ADP in the presence of a proton or sodium gradient. F-type ATPases consist of two structural domains, F(1) containing the extramembraneous catalytic core and F(0) containing the membrane proton channel, linked together by a central stalk and a peripheral stalk. During catalysis, ATP synthesis in the catalytic domain of F(1) is coupled via a rotary mechanism of the central stalk subunits to proton translocation. Component of the F(0) channel, it forms part of the peripheral stalk, linking F(1) to F(0). This is ATP synthase subunit b from Photobacterium profundum (strain SS9).